The following is a 451-amino-acid chain: MPSVVSPQDHLQDDAPAAQLRRAEPCLWLNPHRQPIPAARQAVAGDHISLDDTEKAAARFARFAPLLEGVFPELQATGGVIESPLLPASSLHAAAGLVAGQGALWIKADHRLPVAGSIKARGGIHEVLELAERLALQHGLLTPQSDADDYRALANPAARAVFARYTVAVGSTGNLGLSIGVAASALGFHAVVHMSADAKEWKKQRLRQRGVQVVEHAGDYEGAVAAGRAQAAQDPFSHFVDDERSLSLLLGYSAAALHLRQQLRDAGIVVDAQHPLFVYLPCGVGGAPAGITFGLRQVLGAHVHCFFAEPVQSPCFMVQMMAGQGAHPSVYDWGLTNRTEADGLAVPRASLPAAELMEPLLAGCFTVCDDTLFRQLVQVLDATGERIEPSAAAGLSGPGFLTGTETGRTWLHAQGLWPHLAQATHLVWTTGGLYVPPEAYARFEERGRALG.

K119 carries the N6-(pyridoxal phosphate)lysine modification.

This sequence belongs to the serine/threonine dehydratase family. DsdA subfamily. The cofactor is pyridoxal 5'-phosphate.

The catalysed reaction is D-serine = pyruvate + NH4(+). The protein is Probable D-serine dehydratase of Acidovorax sp. (strain JS42).